The sequence spans 356 residues: Arginine kinase Lit v 2 (356 aa).

Positions 9–91 (KLEAGFKKLE…FDPIIEDYHV (83 aa)) constitute a Phosphagen kinase N-terminal domain. 64–68 (GVGIY) lines the L-arginine pocket. The Phosphagen kinase C-terminal domain occupies 119 to 356 (FVISTRVRCG…LELIKMEKEM (238 aa)). ATP-binding positions include 122 to 126 (STRVR) and H185. E225 provides a ligand contact to L-arginine. R229 is a binding site for ATP. L-arginine is bound at residue C271. ATP contacts are provided by residues 280 to 284 (RASVH) and 309 to 314 (RGTRGE). E314 contacts L-arginine.

This sequence belongs to the ATP:guanido phosphotransferase family. Expressed in muscle (at protein level). Expressed in muscle, heart, nerve, stomach and hemocytes, with the highest expression in muscle. Very low expression in eyestalk and intestine. Not expressed in hepatopancreas, gill and skin.

It carries out the reaction L-arginine + ATP = N(omega)-phospho-L-arginine + ADP + H(+). With respect to regulation, no change in activity after supplementation with 10 mM glucose. However, activity decreases significantly when glucose concentration is higher than 50 mM and almost all activity is lost with 200 mM glucose. Activity is significantly increased after treatment with 10 mM and 50 mM ATP. However, activity drops significantly with 200 mM ATP. Inhibited by 10-200 mM alpha-ketoglutarate. No change in activity after incubation with 10-200 mM L-citrulline, L-ornaline or glycerol. Functionally, catalyzes the reversible transfer of high energy ATP gamma-phosphate group to L-arginine. The chain is Arginine kinase Lit v 2 from Penaeus vannamei (Whiteleg shrimp).